We begin with the raw amino-acid sequence, 90 residues long: Barstar (90 aa).

It belongs to the barstar family.

It localises to the cytoplasm. Functionally, inhibitor of the ribonuclease barnase. Forms a one-to-one non-covalent complex. The sequence is that of Barstar from Bacillus amyloliquefaciens (Bacillus velezensis).